We begin with the raw amino-acid sequence, 1500 residues long: Copper-transporting ATPase 1 (1500 aa).

The Cytoplasmic portion of the chain corresponds to 1–653; sequence MDPSMGVNSV…KREIRQWRRS (653 aa). 2 HMA domains span residues 8–74 and 85–151; these read NSVT…FDAV and TDTL…LDTG. Cu(+)-binding residues include Thr-18, Cys-19, and Cys-22. Thr-152 is subject to Phosphothreonine. The region spanning 171–237 is the HMA 3 domain; the sequence is VVLKMKVEGM…QIEAMGFPAF (67 aa). Cu(+)-binding residues include Cys-182 and Cys-185. Phosphoserine is present on Ser-270. One can recognise an HMA 4 domain in the interval 277–343; the sequence is STATFIIDGM…AIEAVSPGLY (67 aa). Residues Cys-288 and Cys-291 each contribute to the Cu(+) site. At Thr-327 the chain carries Phosphothreonine. 4 positions are modified to phosphoserine: Ser-339, Ser-353, Ser-357, and Ser-362. HMA domains are found at residues 377–443, 488–554, and 564–630; these read QETV…FDAT, SKCY…FGAT, and GVLE…FEAS. Cys-388, Cys-391, Cys-499, Cys-502, Cys-575, and Cys-578 together coordinate Cu(+). A helical membrane pass occupies residues 654–675; the sequence is FLVSLFFCIPVMGLMIYMMVMD. The Extracellular segment spans residues 676–714; the sequence is HHFATLHHNQNMSKEEMINLHSSMFLERQILPGLSVMNL. N-linked (GlcNAc...) asparagine glycosylation occurs at Asn-686. A helical transmembrane segment spans residues 715-734; the sequence is LSFLLCVPVQFFGGWYFYIQ. Residues 735 to 741 lie on the Cytoplasmic side of the membrane; the sequence is AYKALKH. A helical membrane pass occupies residues 742–762; that stretch reads KTANMDVLIVLATTIAFAYSL. At 763–781 the chain is on the extracellular side; the sequence is IILLVAMYERAKVNPITFF. Residues 782-802 form a helical membrane-spanning segment; the sequence is DTPPMLFVFIALGRWLEHIAK. Residues 803–936 lie on the Cytoplasmic side of the membrane; the sequence is GKTSEALAKL…KAPIQQFADK (134 aa). The helical transmembrane segment at 937-959 threads the bilayer; sequence LSGYFVPFIVFVSIATLLVWIVI. Topologically, residues 960-989 are extracellular; sequence GFLNFEIVETYFPGYNRSISRTETIIRFAF. N-linked (GlcNAc...) asparagine glycosylation occurs at Asn-975. A helical transmembrane segment spans residues 990-1011; it reads QASITVLCIACPCSLGLATPTA. Over 1012–1356 the chain is Cytoplasmic; that stretch reads VMVGTGVGAQ…LSRKTVKRIR (345 aa). Asp-1044 acts as the 4-aspartylphosphate intermediate in catalysis. ATP is bound at residue Glu-1081. Residue Thr-1212 is modified to Phosphothreonine. Residues Asp-1301 and Asp-1305 each coordinate Mg(2+). The chain crosses the membrane as a helical span at residues 1357–1374; the sequence is INFVFALIYNLVGIPIAA. Residues 1375–1385 are Extracellular-facing; the sequence is GVFMPIGLVLQ. Residues 1386–1405 form a helical membrane-spanning segment; it reads PWMGSAAMAASSVSVVLSSL. Topologically, residues 1406–1500 are cytoplasmic; the sequence is FLKLYRKPTY…DFREDDDTAL (95 aa). Phosphoserine is present on residues Ser-1430, Ser-1432, Ser-1460, Ser-1463, and Ser-1466. The Endocytosis signal motif lies at 1467–1468; it reads LL. Residues Ser-1469, Ser-1473, Ser-1476, and Ser-1486 each carry the phosphoserine modification. The segment at 1486–1500 is PDZD11-binding; sequence SLLVGDFREDDDTAL. The short motif at 1487 to 1488 is the Endocytosis signal element; sequence LL.

This sequence belongs to the cation transport ATPase (P-type) (TC 3.A.3) family. Type IB subfamily. In terms of assembly, monomer. Interacts with PDZD11. Interacts with ATOX1 and COMMD1. Interacts with TYRP1. Directly interacts with SOD3; this interaction is copper-dependent and is required for SOD3 activity. In terms of tissue distribution, widely expressed including in heart, brain, lung, muscle, kidney, pancreas, and to a lesser extent placenta. Expressed in fibroblasts, aortic smooth muscle cells, aortic endothelial cells and umbilical vein endothelial cells (at protein level). As to expression, expressed in cerebellum and brain cortex.

The protein resides in the golgi apparatus. It is found in the trans-Golgi network membrane. The protein localises to the cell membrane. Its subcellular location is the melanosome membrane. It localises to the early endosome membrane. The protein resides in the cell projection. It is found in the axon. The protein localises to the dendrite. Its subcellular location is the postsynaptic density. It localises to the cytoplasm. The protein resides in the cytosol. It is found in the endoplasmic reticulum. It carries out the reaction Cu(+)(in) + ATP + H2O = Cu(+)(out) + ADP + phosphate + H(+). Its function is as follows. ATP-driven copper (Cu(+)) ion pump that plays an important role in intracellular copper ion homeostasis. Within a catalytic cycle, acquires Cu(+) ion from donor protein on the cytoplasmic side of the membrane and delivers it to acceptor protein on the lumenal side. The transfer of Cu(+) ion across the membrane is coupled to ATP hydrolysis and is associated with a transient phosphorylation that shifts the pump conformation from inward-facing to outward-facing state. Under physiological conditions, at low cytosolic copper concentration, it is localized at the trans-Golgi network (TGN) where it transfers Cu(+) ions to cuproenzymes of the secretory pathway. Upon elevated cytosolic copper concentrations, it relocalizes to the plasma membrane where it is responsible for the export of excess Cu(+) ions. May play a dual role in neuron function and survival by regulating cooper efflux and neuronal transmission at the synapse as well as by supplying Cu(+) ions to enzymes such as PAM, TYR and SOD3. In the melanosomes of pigmented cells, provides copper cofactor to TYR to form an active TYR holoenzyme for melanin biosynthesis. In Homo sapiens (Human), this protein is Copper-transporting ATPase 1.